A 145-amino-acid polypeptide reads, in one-letter code: Shadow of prion protein (145 aa).

An N-terminal signal peptide occupies residues 1-24 (MNWAAAVCWALLLAATFLCDGSAA). N105 is a glycosylation site (N-linked (GlcNAc...) asparagine). The GPI-anchor amidated serine moiety is linked to residue S119. Positions 120-145 (GAGPTGHRHLCPLLGGALGALRLLRP) are cleaved as a propeptide — removed in mature form.

This sequence belongs to the SPRN family. N-glycosylated. In terms of tissue distribution, mainly expressed in brain.

The protein resides in the cell membrane. Functionally, prion-like protein that has PrP(C)-like neuroprotective activity. May act as a modulator for the biological actions of normal and abnormal PrP. In Ovis aries (Sheep), this protein is Shadow of prion protein (SPRN).